The following is a 393-amino-acid chain: NAD(P)H-quinone oxidoreductase subunit H, chloroplastic (393 aa).

The protein belongs to the complex I 49 kDa subunit family. NDH is composed of at least 16 different subunits, 5 of which are encoded in the nucleus.

The protein localises to the plastid. Its subcellular location is the chloroplast thylakoid membrane. It catalyses the reaction a plastoquinone + NADH + (n+1) H(+)(in) = a plastoquinol + NAD(+) + n H(+)(out). It carries out the reaction a plastoquinone + NADPH + (n+1) H(+)(in) = a plastoquinol + NADP(+) + n H(+)(out). NDH shuttles electrons from NAD(P)H:plastoquinone, via FMN and iron-sulfur (Fe-S) centers, to quinones in the photosynthetic chain and possibly in a chloroplast respiratory chain. The immediate electron acceptor for the enzyme in this species is believed to be plastoquinone. Couples the redox reaction to proton translocation, and thus conserves the redox energy in a proton gradient. The sequence is that of NAD(P)H-quinone oxidoreductase subunit H, chloroplastic from Crucihimalaya wallichii (Rock-cress).